A 354-amino-acid chain; its full sequence is Small ribosomal subunit protein uS2 (354 aa).

Belongs to the universal ribosomal protein uS2 family.

This chain is Small ribosomal subunit protein uS2, found in Methylorubrum populi (strain ATCC BAA-705 / NCIMB 13946 / BJ001) (Methylobacterium populi).